A 317-amino-acid chain; its full sequence is 4-diphosphocytidyl-2-C-methyl-D-erythritol kinase (317 aa).

Residue lysine 11 is part of the active site. Position 99–109 (99–109 (PVAAGLAGGST)) interacts with ATP. Aspartate 141 is an active-site residue.

It belongs to the GHMP kinase family. IspE subfamily.

It carries out the reaction 4-CDP-2-C-methyl-D-erythritol + ATP = 4-CDP-2-C-methyl-D-erythritol 2-phosphate + ADP + H(+). It participates in isoprenoid biosynthesis; isopentenyl diphosphate biosynthesis via DXP pathway; isopentenyl diphosphate from 1-deoxy-D-xylulose 5-phosphate: step 3/6. Its function is as follows. Catalyzes the phosphorylation of the position 2 hydroxy group of 4-diphosphocytidyl-2C-methyl-D-erythritol. This chain is 4-diphosphocytidyl-2-C-methyl-D-erythritol kinase, found in Nostoc sp. (strain PCC 7120 / SAG 25.82 / UTEX 2576).